The primary structure comprises 221 residues: Small ribosomal subunit protein uS2 (221 aa).

The tract at residues Lys202–Arg221 is disordered.

It belongs to the universal ribosomal protein uS2 family.

The sequence is that of Small ribosomal subunit protein uS2 from Methanococcus vannielii (strain ATCC 35089 / DSM 1224 / JCM 13029 / OCM 148 / SB).